We begin with the raw amino-acid sequence, 145 residues long: Hemoglobin subunit beta (145 aa).

A Globin domain is found at 1–145 (MLTAEEKAAV…VANALAHRYH (145 aa)). Thr11 carries the phosphothreonine modification. Lys58 is modified (N6-acetyllysine). Residue His62 coordinates heme b. N6-acetyllysine is present on Lys81. His91 is a heme b binding site. Cys92 is subject to S-nitrosocysteine.

This sequence belongs to the globin family. Heterotetramer of two alpha chains and two beta chains. In terms of tissue distribution, red blood cells.

Functionally, involved in oxygen transport from the lung to the various peripheral tissues. The sequence is that of Hemoglobin subunit beta (HBB) from Alces alces alces (European moose).